Consider the following 103-residue polypeptide: Small ribosomal subunit protein uS10 (103 aa).

Belongs to the universal ribosomal protein uS10 family. In terms of assembly, part of the 30S ribosomal subunit.

Its function is as follows. Involved in the binding of tRNA to the ribosomes. This is Small ribosomal subunit protein uS10 from Campylobacter lari (strain RM2100 / D67 / ATCC BAA-1060).